Reading from the N-terminus, the 957-residue chain is Glycine dehydrogenase (decarboxylating) (957 aa).

K702 carries the post-translational modification N6-(pyridoxal phosphate)lysine.

It belongs to the GcvP family. The glycine cleavage system is composed of four proteins: P, T, L and H. Requires pyridoxal 5'-phosphate as cofactor.

The catalysed reaction is N(6)-[(R)-lipoyl]-L-lysyl-[glycine-cleavage complex H protein] + glycine + H(+) = N(6)-[(R)-S(8)-aminomethyldihydrolipoyl]-L-lysyl-[glycine-cleavage complex H protein] + CO2. In terms of biological role, the glycine cleavage system catalyzes the degradation of glycine. The P protein binds the alpha-amino group of glycine through its pyridoxal phosphate cofactor; CO(2) is released and the remaining methylamine moiety is then transferred to the lipoamide cofactor of the H protein. This Bradyrhizobium sp. (strain ORS 278) protein is Glycine dehydrogenase (decarboxylating).